Reading from the N-terminus, the 195-residue chain is Imidazoleglycerol-phosphate dehydratase (195 aa).

Belongs to the imidazoleglycerol-phosphate dehydratase family.

The protein localises to the cytoplasm. The catalysed reaction is D-erythro-1-(imidazol-4-yl)glycerol 3-phosphate = 3-(imidazol-4-yl)-2-oxopropyl phosphate + H2O. The protein operates within amino-acid biosynthesis; L-histidine biosynthesis; L-histidine from 5-phospho-alpha-D-ribose 1-diphosphate: step 6/9. This is Imidazoleglycerol-phosphate dehydratase from Methylorubrum extorquens (strain CM4 / NCIMB 13688) (Methylobacterium extorquens).